The chain runs to 377 residues: Alanine dehydrogenase (377 aa).

2 residues coordinate substrate: arginine 15 and lysine 74. Residue histidine 95 is the Proton donor/acceptor of the active site. NAD(+) is bound by residues serine 133, aspartate 197, arginine 202, serine 219, 238–239 (VL), 266–269 (VAID), and 304–307 (VGNM). Catalysis depends on aspartate 269, which acts as the Proton donor/acceptor.

The protein belongs to the AlaDH/PNT family. As to quaternary structure, homohexamer.

The enzyme catalyses L-alanine + NAD(+) + H2O = pyruvate + NH4(+) + NADH + H(+). It functions in the pathway organosulfur degradation; alkanesulfonate degradation. In terms of biological role, involved in an anaerobic respiration pathway that converts the sulfonate taurine (2-aminoethanesulfonate) to ammonia, acetate and sulfide. Acts as an alanine dehydrogenase that regenerates pyruvate, the amino group acceptor for the taurine--pyruvate aminotransferase enzyme, and liberates ammonia. The sequence is that of Alanine dehydrogenase from Bilophila wadsworthia (strain 3_1_6).